A 330-amino-acid chain; its full sequence is Aspartate--ammonia ligase (330 aa).

This sequence belongs to the class-II aminoacyl-tRNA synthetase family. AsnA subfamily.

It is found in the cytoplasm. The catalysed reaction is L-aspartate + NH4(+) + ATP = L-asparagine + AMP + diphosphate + H(+). The protein operates within amino-acid biosynthesis; L-asparagine biosynthesis; L-asparagine from L-aspartate (ammonia route): step 1/1. The sequence is that of Aspartate--ammonia ligase from Streptococcus uberis (strain ATCC BAA-854 / 0140J).